We begin with the raw amino-acid sequence, 334 residues long: Procathepsin L (334 aa).

The N-terminal stretch at 1 to 17 is a signal peptide; it reads MNLLLLLAVLCLGTALA. Residues 18 to 113 constitute a propeptide, activation peptide; that stretch reads TPKFDQTFSA…RLFQEPLMLK (96 aa). Glu122 serves as a coordination point for Zn(2+). 2 cysteine pairs are disulfide-bonded: Cys135-Cys178 and Cys169-Cys211. Residue Cys138 is part of the active site. Glu163, Asp184, Glu199, and Glu205 together coordinate Zn(2+). The N-linked (GlcNAc...) (high mannose) asparagine glycan is linked to Asn221. Zn(2+) contacts are provided by Asp227, Asp250, His253, and Asp275. Cys269 and Cys322 form a disulfide bridge. The active site involves His276. Residues 289-290 constitute a propeptide that is removed on maturation; it reads DS. Asn300 is a catalytic residue.

Belongs to the peptidase C1 family. Dimer of a heavy and a light chain linked by disulfide bonds. Interacts with Long isoform of CD74/Ii chain; the interaction stabilizes the conformation of mature CTSL. In terms of processing, during export along the endocytic pathway, pro-CTSL undergoes several proteolytic cleavages to generate the CTSL single-chain and two-chain mature forms, composed of a heavy chain linked to a light chain by disulfide bonds. Autocleavage; produces the single-chain CTSL after cleavage of the propeptide. The cleavage can be intermolecular. In terms of tissue distribution, expressed in thymus, kidney and liver. Expressed in thyroid epithelial cells. Expressed in cortical thymic epithelial cells. Expressed by antigen presenting cells (APCs) such as dendritic cells and macrophages.

The protein resides in the lysosome. The protein localises to the apical cell membrane. It localises to the secreted. Its subcellular location is the extracellular space. It is found in the cytoplasmic vesicle. The protein resides in the secretory vesicle. The protein localises to the chromaffin granule. It catalyses the reaction Specificity close to that of papain. As compared to cathepsin B, cathepsin L exhibits higher activity toward protein substrates, but has little activity on Z-Arg-Arg-NHMec, and no peptidyl-dipeptidase activity.. With respect to regulation, long isoform of CD74/Ii chain stabilizes the conformation of mature CTSL by binding to its active site and serving as a chaperone to help maintain a pool of mature enzyme in endocytic compartments and extracellular space of APCs. IFNG enhances the conversion into the CTSL mature and active form. Inhibited by CST6. Inhibited by the glycopeptide antibiotic teicoplanin. Inhibited by amantadine. In terms of biological role, thiol protease important for the overall degradation of proteins in lysosomes. Involved in the solubilization of cross-linked TG/thyroglobulin and in the subsequent release of thyroid hormone thyroxine (T4) by limited proteolysis of TG/thyroglobulin in the thyroid follicle lumen. In neuroendocrine chromaffin cells secretory vesicles, catalyzes the prohormone proenkephalin processing to the active enkephalin peptide neurotransmitter. In thymus, regulates CD4(+) T cell positive selection by generating the major histocompatibility complex class II (MHCII) bound peptide ligands presented by cortical thymic epithelial cells. Also mediates invariant chain processing in cortical thymic epithelial cells. Major elastin-degrading enzyme at neutral pH. Accumulates as a mature and active enzyme in the extracellular space of antigen presenting cells (APCs) to regulate degradation of the extracellular matrix in the course of inflammation. Secreted form generates endostatin from COL18A1. Critical for cardiac morphology and function. Plays an important role in hair follicle morphogenesis and cycling, as well as epidermal differentiation. Required for maximal stimulation of steroidogenesis by TIMP1. The polypeptide is Procathepsin L (Mus musculus (Mouse)).